A 155-amino-acid polypeptide reads, in one-letter code: SsrA-binding protein (155 aa).

The protein belongs to the SmpB family.

Its subcellular location is the cytoplasm. Required for rescue of stalled ribosomes mediated by trans-translation. Binds to transfer-messenger RNA (tmRNA), required for stable association of tmRNA with ribosomes. tmRNA and SmpB together mimic tRNA shape, replacing the anticodon stem-loop with SmpB. tmRNA is encoded by the ssrA gene; the 2 termini fold to resemble tRNA(Ala) and it encodes a 'tag peptide', a short internal open reading frame. During trans-translation Ala-aminoacylated tmRNA acts like a tRNA, entering the A-site of stalled ribosomes, displacing the stalled mRNA. The ribosome then switches to translate the ORF on the tmRNA; the nascent peptide is terminated with the 'tag peptide' encoded by the tmRNA and targeted for degradation. The ribosome is freed to recommence translation, which seems to be the essential function of trans-translation. This chain is SsrA-binding protein, found in Clostridium acetobutylicum (strain ATCC 824 / DSM 792 / JCM 1419 / IAM 19013 / LMG 5710 / NBRC 13948 / NRRL B-527 / VKM B-1787 / 2291 / W).